A 73-amino-acid polypeptide reads, in one-letter code: Small ribosomal subunit protein bS21 (73 aa).

It belongs to the bacterial ribosomal protein bS21 family.

The sequence is that of Small ribosomal subunit protein bS21 from Parvibaculum lavamentivorans (strain DS-1 / DSM 13023 / NCIMB 13966).